Here is a 211-residue protein sequence, read N- to C-terminus: Large ribosomal subunit protein bL25 (211 aa).

The disordered stretch occupies residues 188 to 211; it reads HREEEKAPEETGEAAPAPTPETGQ. The segment covering 200–211 has biased composition (low complexity); the sequence is EAAPAPTPETGQ.

It belongs to the bacterial ribosomal protein bL25 family. CTC subfamily. As to quaternary structure, part of the 50S ribosomal subunit; part of the 5S rRNA/L5/L18/L25 subcomplex. Contacts the 5S rRNA. Binds to the 5S rRNA independently of L5 and L18.

Functionally, this is one of the proteins that binds to the 5S RNA in the ribosome where it forms part of the central protuberance. The sequence is that of Large ribosomal subunit protein bL25 from Desulforudis audaxviator (strain MP104C).